An 859-amino-acid chain; its full sequence is Villin-like protein (859 aa).

Gelsolin-like repeat units follow at residues Leu24–Glu76, Val148–Ala188, Leu264–Lys308, Leu401–Lys450, Thr521–Glu561, and Leu624–Glu665. Residues Ser793–Phe859 enclose the HP domain.

Belongs to the villin/gelsolin family.

Possible tumor suppressor. The polypeptide is Villin-like protein (Mus musculus (Mouse)).